We begin with the raw amino-acid sequence, 147 residues long: Hemoglobin subunit deltaH (147 aa).

The 145-residue stretch at 3-147 (RLTDSEKAEV…MANALAHKYH (145 aa)) folds into the Globin domain. Heme b-binding residues include His-64 and His-93.

This sequence belongs to the globin family. Heterotetramer of two delta chains and two alpha chains. In terms of tissue distribution, red blood cells.

This chain is Hemoglobin subunit deltaH, found in Heterohyrax brucei (Yellow-spotted hyrax).